The following is a 224-amino-acid chain: N6-methyladenosine RNA demethylase ALKBH (224 aa).

Residues 93-222 (LAQAAIVNFY…RINLNVRQMR (130 aa)) form the Fe2OG dioxygenase domain. Positions 111, 113, and 178 each coordinate Fe cation. Arg213 is a 2-oxoglutarate binding site.

This sequence belongs to the alkB family. Requires Fe(2+) as cofactor.

It carries out the reaction an N(6)-methyladenosine in mRNA + 2-oxoglutarate + O2 = an adenosine in mRNA + formaldehyde + succinate + CO2. RNA demethylase that regulates the stability of mRNAs through an m(6)A-dependent manner. M6A is a modification present at internal sites of mRNAs and some non-coding RNAs and plays a role in mRNA stability and processing. Demethylate m6A at position A1935 within the 3'UTR of transcription factor ZAP1 and plays an important role in C.parasitica development and virulence. Target mRNAs are primarily associated with amino-acid biosynthesis, 2-oxocarboxylic acid metabolism, and ABC transporters, as well as alpha-amino acid metabolism, small-molecule biosynthesis, and the sulfite reductase complex (NADPH). The sequence is that of N6-methyladenosine RNA demethylase ALKBH from Cryphonectria parasitica (strain ATCC 38755 / EP155).